Consider the following 945-residue polypeptide: Glutamyl aminopeptidase (945 aa).

The Cytoplasmic portion of the chain corresponds to M1–H18. The helical; Signal-anchor for type II membrane protein transmembrane segment at V19 to L39 threads the bilayer. Over T40–P945 the chain is Extracellular. A disordered region spans residues P45–S77. 2 N-linked (GlcNAc...) asparagine glycosylation sites follow: N116 and N189. E215 is a binding site for substrate. N-linked (GlcNAc...) asparagine glycosylation is found at N236 and N316. G349–N353 is a binding site for substrate. H385 contacts Zn(2+). E386 acts as the Proton acceptor in catalysis. Positions 389 and 408 each coordinate Zn(2+). N-linked (GlcNAc...) asparagine glycosylation is found at N546, N584, N601, N640, N669, N754, N766, and N792. R878 lines the substrate pocket.

Belongs to the peptidase M1 family. Homodimer; disulfide-linked. Zn(2+) serves as cofactor. Highest expression in kidney proximal tubules and ileum enterocytes. High expression also detected in liver and pituitary. Lower levels in heart, adrenal gland and brain. Not detected in aorta, lung or spleen. In heart, higher levels in ventricle than in atrium. Also expressed in glomerular mesangial cells.

It localises to the cell membrane. It catalyses the reaction Release of N-terminal glutamate (and to a lesser extent aspartate) from a peptide.. Substrate specificity is modulated by calcium which enhances the enzymatic activity for cleavage of acidic residues while reducing its activity with basic residues. Inhibited by aminopeptidase inhibitors amastatin and bestatin. In terms of biological role, regulates central hypertension through its calcium-modulated preference to cleave N-terminal acidic residues from peptides such as angiotensin II. The protein is Glutamyl aminopeptidase (Enpep) of Rattus norvegicus (Rat).